We begin with the raw amino-acid sequence, 723 residues long: Nuclear hormone receptor HR96 (723 aa).

The nuclear receptor DNA-binding region spans 4–79 (PKNCAVCGDK…IGMKSENIMS (76 aa)). 2 NR C4-type zinc fingers span residues 7 to 27 (CAVC…CESC) and 43 to 67 (CPFN…LRKC). The interval 95–163 (AKRRLMENGT…QASSPGTQVN (69 aa)) is disordered. Polar residues-rich tracts occupy residues 122–142 (DSSS…SCGS) and 151–163 (SGRQ…TQVN). The NR LBD domain occupies 483-723 (EQMKLRELRL…LREIFDLKNH (241 aa)).

The protein belongs to the nuclear hormone receptor family. NR1 subfamily.

The protein localises to the nucleus. Its function is as follows. Binds selectively to the HSP27 20E response element. The polypeptide is Nuclear hormone receptor HR96 (Hr96) (Drosophila melanogaster (Fruit fly)).